Here is a 62-residue protein sequence, read N- to C-terminus: Protein YnfQ (62 aa).

It belongs to the YmcF/YnqF peptide family.

The protein is Protein YnfQ of Escherichia coli (strain K12).